Consider the following 1116-residue polypeptide: Large proline-rich protein bag6-B (1116 aa).

The Ubiquitin-like domain maps to 7-82; sequence MDVTVKTLDS…HLVERAPPQT (76 aa). Disordered stretches follow at residues 76-114, 170-221, 329-385, 473-502, 533-589, 640-678, and 1058-1080; these read ERAP…RNGN, EGQP…PSEY, STTG…HPHP, PAAP…APGA, GGSS…GTDQ, VPVS…ESLP, and TGAK…EAQG. The span at 79-100 shows a compositional bias: low complexity; sequence PPQTQTSTSGPSTSSSTSPSSS. Residues 194 to 207 are compositionally biased toward polar residues; that stretch reads RETLPQTTQNADGQ. Residues 208–219 are compositionally biased toward low complexity; the sequence is SNSTPTSHPSPS. Positions 344-353 are enriched in polar residues; that stretch reads GNATPSTNTS. Composition is skewed to low complexity over residues 482-502, 535-580, and 641-652; these read PGAA…APGA, SSTS…SVPS, and PVSTSPPQSASQ. Residues 653 to 672 are compositionally biased toward pro residues; that stretch reads APPPPSSPAPPAHSAPPPAA. Residues 1068–1080 are compositionally biased toward basic and acidic residues; sequence CVKRELDNSEAQG.

As to quaternary structure, component of the bag6/bat3 complex.

It localises to the cytoplasm. The protein resides in the cytosol. The protein localises to the nucleus. It is found in the secreted. Its subcellular location is the extracellular exosome. Functionally, ATP-independent molecular chaperone preventing the aggregation of misfolded and hydrophobic patches-containing proteins. Functions as part of a cytosolic protein quality control complex, the bag6/bat3 complex, which maintains these client proteins in a soluble state and participates in their proper delivery to the endoplasmic reticulum or alternatively can promote their sorting to the proteasome where they undergo degradation. The bag6/bat3 complex is involved in the post-translational delivery of tail-anchored/type II transmembrane proteins to the endoplasmic reticulum membrane. Similarly, the bag6/bat3 complex also functions as a sorting platform for proteins of the secretory pathway that are mislocalized to the cytosol either delivering them to the proteasome for degradation or to the endoplasmic reticulum. The bag6/bat3 complex also plays a role in the endoplasmic reticulum-associated degradation (ERAD), a quality control mechanism that eliminates unwanted proteins of the endoplasmic reticulum through their retrotranslocation to the cytosol and their targeting to the proteasome. It maintains these retrotranslocated proteins in an unfolded yet soluble state condition in the cytosol to ensure their proper delivery to the proteasome. Also required for selective ubiquitin-mediated degradation of defective nascent chain polypeptides by the proteasome. Also involved in endoplasmic reticulum stress-induced pre-emptive quality control, a mechanism that selectively attenuates the translocation of newly synthesized proteins into the endoplasmic reticulum and reroutes them to the cytosol for proteasomal degradation. May ensure the proper degradation of these proteins and thereby protects the endoplasmic reticulum from protein overload upon stress. By stabilizing a large spectrum of proteins, may indirectly affect different biological processes including apoptosis. By controlling the steady-state expression of the IGF1R receptor, indirectly regulates the insulin-like growth factor receptor signaling pathway. In terms of biological role, when nuclear, may also act as a component of some chromatin regulator complex. This is Large proline-rich protein bag6-B from Xenopus laevis (African clawed frog).